The chain runs to 633 residues: Putative serine/threonine-protein kinase L232 (633 aa).

A Protein kinase domain is found at 10 to 314; the sequence is YTIVDKLSEG…QSRKLFYEIL (305 aa). Residues 16–24 and Lys39 contribute to the ATP site; that span reads LSEGTYGIV. The active-site Proton acceptor is Asp133.

This sequence belongs to the protein kinase superfamily. Ser/Thr protein kinase family.

It catalyses the reaction L-seryl-[protein] + ATP = O-phospho-L-seryl-[protein] + ADP + H(+). The enzyme catalyses L-threonyl-[protein] + ATP = O-phospho-L-threonyl-[protein] + ADP + H(+). This is Putative serine/threonine-protein kinase L232 from Acanthamoeba polyphaga mimivirus (APMV).